A 673-amino-acid chain; its full sequence is Estrogen receptor beta (673 aa).

A modulating region spans residues 1-181; it reads MASSPGLDPH…SAVGKADMHF (181 aa). 2 consecutive NR C4-type zinc fingers follow at residues 182–202 and 218–242; these read CAVC…CEGC and CPAT…LRKC. A DNA-binding region (nuclear receptor) is located at residues 182–247; that stretch reads CAVCHDYASG…RLRKCYEVGM (66 aa). Residues 316 to 552 enclose the NR LBD domain; that stretch reads SPEEFISRIM…DLLLEMLDAN (237 aa). The segment at 553–602 is disordered; sequence TSSGGSQPSSSPSSETYSDQHQYPQPPSHLHPGSEQTTADHAIVPPLGPT. The segment covering 554-566 has biased composition (low complexity); sequence SSGGSQPSSSPSS.

The protein belongs to the nuclear hormone receptor family. NR3 subfamily. Binds DNA as a homodimer. Can form a heterodimer with ER-alpha. Abundant in the liver and testes, less abundant in the ovary and barely detectable in the muscle.

The protein resides in the nucleus. Binds estrogens with an affinity similar to that of ER-alpha, and activates expression of reporter genes containing estrogen response elements (ERE) in an estrogen-dependent manner. The protein is Estrogen receptor beta (esr2) of Micropogonias undulatus (Atlantic croaker).